Reading from the N-terminus, the 707-residue chain is ATP-dependent RNA helicase DHX33 (707 aa).

Residues 1-64 (MPEEAGFPPA…LAQPSASPYP (64 aa)) form a disordered region. Residues 1–80 (MPEEAGFPPA…RRSLPIFQAR (80 aa)) are required for nucleolar location. The span at 39–49 (GSGGRGGGGGR) shows a compositional bias: gly residues. The span at 50–64 (RQQPPLAQPSASPYP) shows a compositional bias: low complexity. Positions 84 to 252 (LAQLRNLDNA…FNGAPVLYLE (169 aa)) constitute a Helicase ATP-binding domain. Residue 97-104 (GETGSGKT) participates in ATP binding. A DEAH box motif is present at residues 194–197 (DEAH). The Helicase C-terminal domain occupies 277–450 (SVFQIHQEAP…SVMLQLLAMK (174 aa)). The interval 471–562 (AIAQLDLLGA…ISSEGDHMTL (92 aa)) is HA2; required for interaction with EIF3G and RPL26. Positions 547 to 558 (GVRKKFISSEGD) match the Critical for rDNA-binding motif.

It belongs to the DEAD box helicase family. DEAH subfamily. In terms of assembly, interacts with UBTF. Interacts with DDX3X, EIF3G and EIF3H; the interaction is independent of RNA. Interacts (via HA2 region and Helicase C-terminal domain) with the components of the large ribosomal subunit RPL3, RPL7, RPL26 and RPL27. Interacts (via DEAH box) with NLRP3 (via NACHT domain). Binds to mRNA. Binds to double-stranded RNA (via the helicase C-terminal domain). Interacts (via the helicase C-terminal domain) with MAVS. Ubiquitinated, leading to its degradation by the proteasome. Deubiquitinated by USP36.

The protein localises to the nucleus. The protein resides in the nucleolus. It localises to the nucleoplasm. Its subcellular location is the cytoplasm. It is found in the inflammasome. It catalyses the reaction ATP + H2O = ADP + phosphate + H(+). In terms of biological role, implicated in nucleolar organization, ribosome biogenesis, protein synthesis and cytoplasmic dsRNA sensing. Stimulates RNA polymerase I transcription of the 47S precursor rRNA. Associates with ribosomal DNA (rDNA) loci where it is involved in POLR1A recruitment. In the cytoplasm, promotes elongation-competent 80S ribosome assembly at the late stage of mRNA translation initiation. Senses cytosolic dsRNA mediating NLRP3 inflammasome formation in macrophages and type I interferon production in myeloid dendritic cells. Required for NLRP3 activation induced by viral dsRNA and bacterial RNA. In dendritic cells, required for induction of type I interferon production induced by cytoplasmic dsRNA via the activation of MAPK and NF-kappa-B signaling pathways. The sequence is that of ATP-dependent RNA helicase DHX33 from Homo sapiens (Human).